Reading from the N-terminus, the 377-residue chain is O-phospho-L-seryl-tRNA:Cys-tRNA synthase (377 aa).

Pyridoxal 5'-phosphate is bound by residues 82–83 (AR), Asn-189, and 212–214 (SGH). At Lys-215 the chain carries N6-(pyridoxal phosphate)lysine.

Belongs to the SepCysS family. As to quaternary structure, homodimer. Interacts with SepRS. Pyridoxal 5'-phosphate serves as cofactor.

It carries out the reaction O-phospho-L-seryl-tRNA(Cys) + hydrogen sulfide + H(+) = L-cysteinyl-tRNA(Cys) + phosphate. Converts O-phospho-L-seryl-tRNA(Cys) (Sep-tRNA(Cys)) to L-cysteinyl-tRNA(Cys) (Cys-tRNA(Cys)). The sequence is that of O-phospho-L-seryl-tRNA:Cys-tRNA synthase from Methanocaldococcus jannaschii (strain ATCC 43067 / DSM 2661 / JAL-1 / JCM 10045 / NBRC 100440) (Methanococcus jannaschii).